The following is a 173-amino-acid chain: Protein Rv3753c (173 aa).

This is Protein Rv3753c from Mycobacterium tuberculosis (strain ATCC 25618 / H37Rv).